A 210-amino-acid polypeptide reads, in one-letter code: 7-carboxy-7-deazaguanine synthase (210 aa).

Substrate contacts are provided by residues L12–G14 and R27. Positions H18–R210 constitute a Radical SAM core domain. [4Fe-4S] cluster-binding residues include C31, C46, and C49. T51 serves as a coordination point for Mg(2+). Residue T90 participates in substrate binding. S-adenosyl-L-methionine is bound by residues G92, S133–K135, and Q173–D176.

It belongs to the radical SAM superfamily. 7-carboxy-7-deazaguanine synthase family. Homodimer. Requires [4Fe-4S] cluster as cofactor. The cofactor is S-adenosyl-L-methionine. It depends on Mg(2+) as a cofactor.

It catalyses the reaction 6-carboxy-5,6,7,8-tetrahydropterin + H(+) = 7-carboxy-7-deazaguanine + NH4(+). It functions in the pathway purine metabolism; 7-cyano-7-deazaguanine biosynthesis. Functionally, catalyzes the complex heterocyclic radical-mediated conversion of 6-carboxy-5,6,7,8-tetrahydropterin (CPH4) to 7-carboxy-7-deazaguanine (CDG), a step common to the biosynthetic pathways of all 7-deazapurine-containing compounds. In Bradyrhizobium diazoefficiens (strain JCM 10833 / BCRC 13528 / IAM 13628 / NBRC 14792 / USDA 110), this protein is 7-carboxy-7-deazaguanine synthase.